Reading from the N-terminus, the 409-residue chain is CUB domain-containing protein (409 aa).

The first 18 residues, 1–18 (MFLFSLTVLSALVLITES), serve as a signal peptide directing secretion. Residues 154–229 (TEASTTAQET…TTAPTTAPAP (76 aa)) show a composition bias toward low complexity. The segment at 154–230 (TEASTTAQET…TAPTTAPAPI (77 aa)) is disordered. A disulfide bond links Cys232 and Cys257. The region spanning 232–338 (CGGVLRGRGT…QEYVDYYYYD (107 aa)) is the CUB domain. Residues 389-409 (VQGAADSESEASASSESSDED) form a disordered region. The segment covering 392–409 (AADSESEASASSESSDED) has biased composition (low complexity).

In terms of tissue distribution, component of the acid-insoluble and acid-soluble organic matrix of the aragonitic skeleton (at protein level).

It localises to the secreted. The sequence is that of CUB domain-containing protein from Acropora millepora (Staghorn coral).